A 176-amino-acid chain; its full sequence is NAD(P)H-quinone oxidoreductase subunit 6, chloroplastic (176 aa).

5 helical membrane-spanning segments follow: residues 10–30 (FLLV…VLLP), 32–52 (PIFS…LYIL), 61–81 (AQLL…VMFM), 92–112 (LWTV…FLLM), and 152–172 (FFLP…GAIS).

Belongs to the complex I subunit 6 family. NDH is composed of at least 16 different subunits, 5 of which are encoded in the nucleus.

It localises to the plastid. It is found in the chloroplast thylakoid membrane. It catalyses the reaction a plastoquinone + NADH + (n+1) H(+)(in) = a plastoquinol + NAD(+) + n H(+)(out). It carries out the reaction a plastoquinone + NADPH + (n+1) H(+)(in) = a plastoquinol + NADP(+) + n H(+)(out). Functionally, NDH shuttles electrons from NAD(P)H:plastoquinone, via FMN and iron-sulfur (Fe-S) centers, to quinones in the photosynthetic chain and possibly in a chloroplast respiratory chain. The immediate electron acceptor for the enzyme in this species is believed to be plastoquinone. Couples the redox reaction to proton translocation, and thus conserves the redox energy in a proton gradient. This Capsella bursa-pastoris (Shepherd's purse) protein is NAD(P)H-quinone oxidoreductase subunit 6, chloroplastic (ndhG).